The following is a 639-amino-acid chain: MGKIIGIDLGTTNSCVAVLDGGKARVLENAEGDRTTPSIIAYTDDETIVGSPAKRQAVTNPTNTFFAIKRLIGRRFKDDEVQRDVNIMPFKIIAADNGDAWVESRGNKMAPPQVSAEILKKMKKTAEDFLGEEVTEAVITVPAYFNDSQRQATKDAGRIAGLDVKRIINEPTAAALAYGIDKKQGDNIVAVYDLGGGTFDISIIEIDSNDGDQTFEVLATNGDTHLGGEDFDNRLINYLADEFKKEQGLDLRKDPLAMQRLKEAAEKAKIELSSTNHTEVNLPYITADATGPKHLVIKITRAKLESLVEDLILRTLEPLKVALADADLSVTDINEVILVGGQTRMPKVQEAVTNFFGKEPRKDVNPDEAVAVGAAIQAGVLSGDVKDVLLLDVTPLSLGIETMGSVMTKLIEKNTTIPTKAQQVFSTADDNQSAVTIHVLQGERKQASANKSLGQFNLDGIEPAQRGQPQIEVMFDIDADGILHVSATDKKTGKKQNITIKASSGLSEEEVAQMVRDAEAHADEDKKFEELVQSRNQADGLVHATKKQVEEAGDALPSEDKEKIQAAMDAVDTAIKGNDKEAIEKATQNLIEASAKLMEIAQAKSQAQGGDNADAGKQANAAADDVVDAEFEEVKDDKK.

Residue T198 is modified to Phosphothreonine; by autocatalysis. The interval 604-639 (KSQAQGGDNADAGKQANAAADDVVDAEFEEVKDDKK) is disordered. A compositionally biased stretch (low complexity) spans 606 to 624 (QAQGGDNADAGKQANAAAD). Residues 625–639 (DVVDAEFEEVKDDKK) are compositionally biased toward acidic residues.

Belongs to the heat shock protein 70 family.

Its function is as follows. Acts as a chaperone. The chain is Chaperone protein DnaK from Shewanella baltica (strain OS223).